The chain runs to 405 residues: Eukaryotic translation initiation factor 5 (405 aa).

27 to 34 is a binding site for GTP; the sequence is GRGNGIKT. Residues 143–202 form a disordered region; the sequence is NPPDSVSGSKKKKKAATASANVRGGGLSISDIAQGKSQNAPSDGTGSSTPQHHDEDEDEL. A phosphoserine mark is found at Ser-170 and Ser-172. The segment covering 177–192 has biased composition (polar residues); the sequence is GKSQNAPSDGTGSSTP. Thr-191 bears the Phosphothreonine mark. At Ser-228 the chain carries Phosphoserine. The W2 domain occupies 241 to 402; the sequence is VNSELTQLDE…ETAESDDDEE (162 aa). Thr-317 bears the Phosphothreonine mark. Ser-397 bears the Phosphoserine mark.

The protein belongs to the eIF-2-beta/eIF-5 family. In terms of assembly, monomer. The factors eIF-1, eIF-2, eIF-3, TIF5/eIF-5 and methionyl-tRNAi form a multifactor complex (MFC) that may bind to the 40S ribosome. TIF32, NIP1 and TIF5/eIF-5 comprise a minimal 40S-ribosome-binding unit. Interacts with NIP1. Interacts with SUI3.

Its function is as follows. Catalyzes the hydrolysis of GTP bound to the 40S ribosomal initiation complex (40S.mRNA.Met-tRNA[F].eIF-2.GTP) with the subsequent joining of a 60S ribosomal subunit resulting in the release of eIF-2 and the guanine nucleotide. The subsequent joining of a 60S ribosomal subunit results in the formation of a functional 80S initiation complex (80S.mRNA.Met-tRNA[F]). eIF-5 is essential for cell viability. The polypeptide is Eukaryotic translation initiation factor 5 (TIF5) (Saccharomyces cerevisiae (strain ATCC 204508 / S288c) (Baker's yeast)).